The sequence spans 323 residues: Cytochrome c biogenesis protein CcsA (323 aa).

8 helical membrane passes run 17–37 (VVSIVISIHLITLFVNQIVGF), 44–64 (GMIITFLCITGLLITRWFFSG), 68–88 (FSDLYESLIFLSWGFSIFYMV), 98–118 (LSTIIAPSVIFTQGFATSGLL), 143–163 (MILGYAALLCGSLLSVAILVI), 229–249 (IISLGFIFLTIGILSGAVWAN), 262–279 (ETWAFITWTIFAIYLHSR), and 291–311 (IVASIGFLIIWICYFGVNLLG).

Belongs to the CcmF/CycK/Ccl1/NrfE/CcsA family. May interact with Ccs1.

Its subcellular location is the plastid. It is found in the chloroplast thylakoid membrane. Required during biogenesis of c-type cytochromes (cytochrome c6 and cytochrome f) at the step of heme attachment. In Lotus japonicus (Lotus corniculatus var. japonicus), this protein is Cytochrome c biogenesis protein CcsA.